The following is a 690-amino-acid chain: Elongation factor G (690 aa).

Residues 8 to 283 (EDYRNFGIMA…AVVDYLPSPV (276 aa)) form the tr-type G domain. GTP-binding positions include 17–24 (AHIDAGKT), 81–85 (DTPGH), and 135–138 (NKMD).

This sequence belongs to the TRAFAC class translation factor GTPase superfamily. Classic translation factor GTPase family. EF-G/EF-2 subfamily.

Its subcellular location is the cytoplasm. Functionally, catalyzes the GTP-dependent ribosomal translocation step during translation elongation. During this step, the ribosome changes from the pre-translocational (PRE) to the post-translocational (POST) state as the newly formed A-site-bound peptidyl-tRNA and P-site-bound deacylated tRNA move to the P and E sites, respectively. Catalyzes the coordinated movement of the two tRNA molecules, the mRNA and conformational changes in the ribosome. This chain is Elongation factor G, found in Rhodopseudomonas palustris (strain BisA53).